Reading from the N-terminus, the 306-residue chain is Pantothenate kinase (306 aa).

90-97 (GSVAVGKS) contacts ATP.

This sequence belongs to the prokaryotic pantothenate kinase family.

The protein resides in the cytoplasm. The enzyme catalyses (R)-pantothenate + ATP = (R)-4'-phosphopantothenate + ADP + H(+). It participates in cofactor biosynthesis; coenzyme A biosynthesis; CoA from (R)-pantothenate: step 1/5. The sequence is that of Pantothenate kinase from Listeria welshimeri serovar 6b (strain ATCC 35897 / DSM 20650 / CCUG 15529 / CIP 8149 / NCTC 11857 / SLCC 5334 / V8).